The sequence spans 474 residues: Tumor necrosis factor receptor superfamily member 1B (474 aa).

Positions 1–22 (MAPAALWVALVFELQLWATGHT) are cleaved as a signal peptide. Residues 23–258 (VPAQVVLTPY…PIIEQSTKGG (236 aa)) lie on the Extracellular side of the membrane. O-linked (GalNAc...) threonine glycosylation is present at threonine 30. TNFR-Cys repeat units lie at residues 39-77 (ECQI…TVCA), 78-119 (DCEA…NRVC), 120-164 (ACEA…VLCK), and 165-203 (ACAP…AVCA). 10 cysteine pairs are disulfide-bonded: cysteine 40-cysteine 54, cysteine 55-cysteine 68, cysteine 58-cysteine 76, cysteine 79-cysteine 94, cysteine 97-cysteine 111, cysteine 101-cysteine 119, cysteine 121-cysteine 127, cysteine 136-cysteine 145, cysteine 139-cysteine 163, and cysteine 166-cysteine 181. An N-linked (GlcNAc...) asparagine glycan is attached at asparagine 69. Asparagine 195 is a glycosylation site (N-linked (GlcNAc...) asparagine). O-linked (GalNAc...) threonine glycans are attached at residues threonine 208 and threonine 224. The interval 220-243 (QPEPTRSQPLDQEPGPSQTPSILT) is disordered. The helical transmembrane segment at 259 to 288 (ISLPIGLIVGVTSLGLLMLGLVNCIILVQR) threads the bilayer. Residues 289-474 (KKKPSCLQRD…WFDQIAVKVA (186 aa)) are Cytoplasmic-facing. 3 disordered regions span residues 295 to 314 (LQRD…DAVG), 321 to 378 (LTTA…GSHG), and 397 to 463 (SQCS…PSQA). Over residues 297–310 (RDAKVPHVPDEKSQ) the composition is skewed to basic and acidic residues. Composition is skewed to low complexity over residues 324 to 338 (APSS…SASA) and 363 to 378 (ARAS…GSHG). Phosphoserine is present on serine 331. Polar residues predominate over residues 429-442 (ECPSQSPCETTETL).

As to quaternary structure, binds to TRAF2. Interacts with BMX. Interacts (activated form) with XPNPEP3.

It is found in the membrane. Functionally, receptor with high affinity for TNFSF2/TNF-alpha and approximately 5-fold lower affinity for homotrimeric TNFSF1/lymphotoxin-alpha. The TRAF1/TRAF2 complex recruits the apoptotic suppressors BIRC2 and BIRC3 to TNFRSF1B/TNFR2. The chain is Tumor necrosis factor receptor superfamily member 1B (Tnfrsf1b) from Mus musculus (Mouse).